The chain runs to 124 residues: uncharacterized protein (124 aa).

It localises to the plastid. It is found in the chloroplast. This is an uncharacterized protein from Chlamydomonas reinhardtii (Chlamydomonas smithii).